The chain runs to 1303 residues: Endoplasmic reticulum transmembrane helix translocase spfA (1303 aa).

A run of 2 helical transmembrane segments spans residues L25–S45 and E57–T77. Residues K158 to P191 are A-domain; part 1. The next 2 membrane-spanning stretches (helical) occupy residues E201–D221 and Y223–W243. Positions N256–E408 are A-domain; part 2. N287 carries N-linked (GlcNAc...) asparagine glycosylation. Residues V415–V435 traverse the membrane as a helical segment. N-linked (GlcNAc...) asparagine glycosylation is present at N474. The interval A484–E513 is P-domain; part 1. Residue D505 is the 4-aspartylphosphate intermediate of the active site. Residues D505 and T507 each contribute to the Mg(2+) site. D505–T507 serves as a coordination point for ATP. The N-domain stretch occupies residues L515–P721. N589 carries an N-linked (GlcNAc...) asparagine glycan. ATP-binding residues include F616 and R678. The interval E724–S883 is P-domain; part 2. The N-linked (GlcNAc...) asparagine glycan is linked to N734. Residues D746 and D862–D866 each bind ATP. D862 is a binding site for Mg(2+). The segment at P884–I1019 is arm-like. N958 carries an N-linked (GlcNAc...) asparagine glycan. The segment at K1020–A1035 is P-domain; part 3. 5 consecutive transmembrane segments (helical) span residues I1060–I1080, F1082–S1102, V1122–L1142, A1201–I1221, and V1239–L1259. Positions D1277–V1303 are disordered.

Belongs to the cation transport ATPase (P-type) (TC 3.A.3) family. Type V subfamily. Mg(2+) serves as cofactor.

The protein localises to the endoplasmic reticulum membrane. The enzyme catalyses [protein]-with a C-terminal TM segment(out) + ATP + H2O = [protein]-with a C-terminal TM segment(in) + ADP + phosphate + H(+). The ATPase activity is stimulated by phosphatidylinositol 4-phosphate (PI4P). Functionally, endoplasmic reticulum (ER) translocase required to remove mitochondrial transmembrane proteins mistargeted to the endoplasmic reticulum. Acts as a dislocase that mediates the ATP-dependent extraction of mislocalized mitochondrial transmembrane proteins from the endoplasmic reticulum membrane. Works in concert with the ER Ca(2+) pump srcA to support ER homeostasis. With srcA, also supports redox homeostasis and virulence. In Aspergillus fumigatus (strain ATCC MYA-4609 / CBS 101355 / FGSC A1100 / Af293) (Neosartorya fumigata), this protein is Endoplasmic reticulum transmembrane helix translocase spfA.